The sequence spans 215 residues: Probable transaldolase (215 aa).

The active-site Schiff-base intermediate with substrate is the K83.

It belongs to the transaldolase family. Type 3B subfamily.

It is found in the cytoplasm. The enzyme catalyses D-sedoheptulose 7-phosphate + D-glyceraldehyde 3-phosphate = D-erythrose 4-phosphate + beta-D-fructose 6-phosphate. The protein operates within carbohydrate degradation; pentose phosphate pathway; D-glyceraldehyde 3-phosphate and beta-D-fructose 6-phosphate from D-ribose 5-phosphate and D-xylulose 5-phosphate (non-oxidative stage): step 2/3. Its function is as follows. Transaldolase is important for the balance of metabolites in the pentose-phosphate pathway. The protein is Probable transaldolase of Desulforapulum autotrophicum (strain ATCC 43914 / DSM 3382 / VKM B-1955 / HRM2) (Desulfobacterium autotrophicum).